The sequence spans 246 residues: 1-(5-phosphoribosyl)-5-[(5-phosphoribosylamino)methylideneamino] imidazole-4-carboxamide isomerase (246 aa).

The active-site Proton acceptor is D10. Residue D135 is the Proton donor of the active site.

Belongs to the HisA/HisF family.

Its subcellular location is the cytoplasm. The catalysed reaction is 1-(5-phospho-beta-D-ribosyl)-5-[(5-phospho-beta-D-ribosylamino)methylideneamino]imidazole-4-carboxamide = 5-[(5-phospho-1-deoxy-D-ribulos-1-ylimino)methylamino]-1-(5-phospho-beta-D-ribosyl)imidazole-4-carboxamide. Its pathway is amino-acid biosynthesis; L-histidine biosynthesis; L-histidine from 5-phospho-alpha-D-ribose 1-diphosphate: step 4/9. The polypeptide is 1-(5-phosphoribosyl)-5-[(5-phosphoribosylamino)methylideneamino] imidazole-4-carboxamide isomerase (Methanosarcina mazei (strain ATCC BAA-159 / DSM 3647 / Goe1 / Go1 / JCM 11833 / OCM 88) (Methanosarcina frisia)).